A 360-amino-acid polypeptide reads, in one-letter code: Uroporphyrinogen decarboxylase (360 aa).

Residues 31-35 (RQAGR), Asp-81, Tyr-157, Thr-212, and His-333 each bind substrate.

Belongs to the uroporphyrinogen decarboxylase family. Homodimer.

The protein localises to the cytoplasm. It carries out the reaction uroporphyrinogen III + 4 H(+) = coproporphyrinogen III + 4 CO2. It participates in porphyrin-containing compound metabolism; protoporphyrin-IX biosynthesis; coproporphyrinogen-III from 5-aminolevulinate: step 4/4. Catalyzes the decarboxylation of four acetate groups of uroporphyrinogen-III to yield coproporphyrinogen-III. The polypeptide is Uroporphyrinogen decarboxylase (Janthinobacterium sp. (strain Marseille) (Minibacterium massiliensis)).